A 251-amino-acid chain; its full sequence is Hydroxyacylglutathione hydrolase (251 aa).

The Zn(2+) site is built by H53, H55, D57, H58, H110, D127, and H165.

The protein belongs to the metallo-beta-lactamase superfamily. Glyoxalase II family. As to quaternary structure, monomer. The cofactor is Zn(2+).

The catalysed reaction is an S-(2-hydroxyacyl)glutathione + H2O = a 2-hydroxy carboxylate + glutathione + H(+). Its pathway is secondary metabolite metabolism; methylglyoxal degradation; (R)-lactate from methylglyoxal: step 2/2. In terms of biological role, thiolesterase that catalyzes the hydrolysis of S-D-lactoyl-glutathione to form glutathione and D-lactic acid. The protein is Hydroxyacylglutathione hydrolase of Escherichia coli O6:H1 (strain CFT073 / ATCC 700928 / UPEC).